A 267-amino-acid chain; its full sequence is Glutamate 5-kinase (267 aa).

ATP is bound at residue K14. Substrate is bound by residues S54, D141, and N157. Residues 177 to 178 (SD) and 219 to 225 (TGGMLSK) each bind ATP.

The protein belongs to the glutamate 5-kinase family.

The protein resides in the cytoplasm. It catalyses the reaction L-glutamate + ATP = L-glutamyl 5-phosphate + ADP. Its pathway is amino-acid biosynthesis; L-proline biosynthesis; L-glutamate 5-semialdehyde from L-glutamate: step 1/2. Catalyzes the transfer of a phosphate group to glutamate to form L-glutamate 5-phosphate. The protein is Glutamate 5-kinase of Streptococcus agalactiae serotype Ia (strain ATCC 27591 / A909 / CDC SS700).